A 327-amino-acid chain; its full sequence is Probable cytosolic iron-sulfur protein assembly protein CIAO1 homolog (327 aa).

WD repeat units follow at residues 3 to 42 (GHEDRVWSVAWSPNGFVLASCGGDKTIRIWGKEGDKWICK), 48 to 87 (GHQRTIRSLGWSPCGTFLASASFDATTCIWDQKSGEFECN), 92 to 131 (GHENEVKSVDWSVSGSLLATCGRDKSVWIWEVQEDDEYEC), 137 to 176 (SHTQDVKKVVWHPTKEILASCSYDDTIKLYKEDEDDWSCC), 181 to 220 (GHESTVWSISFDGSGDRIVSCSDDKTVRIWKSYPPGNQEG), 239 to 278 (YHDRTIYDVHWSKVSGLIATASGDDCIRIFKEDTNSDRNQ), and 290 to 327 (AHSMDVNSICWHPKDENILATCSDDGTVKLWRFTPAEE).

It belongs to the WD repeat CIA1 family.

Functionally, essential component of the cytosolic iron-sulfur (Fe/S) protein assembly machinery. Required for the maturation of extramitochondrial Fe/S proteins. This is Probable cytosolic iron-sulfur protein assembly protein CIAO1 homolog from Nematostella vectensis (Starlet sea anemone).